Here is a 277-residue protein sequence, read N- to C-terminus: Pantothenate synthetase (277 aa).

Residue 26–33 coordinates ATP; that stretch reads MGNLHEGH. Catalysis depends on His-33, which acts as the Proton donor. Residue Gln-57 participates in (R)-pantoate binding. Residue Gln-57 participates in beta-alanine binding. 144–147 contacts ATP; sequence GKKD. Gln-150 contributes to the (R)-pantoate binding site. ATP contacts are provided by residues Gly-173 and 181 to 184; that span reads LSSR.

The protein belongs to the pantothenate synthetase family. As to quaternary structure, homodimer.

Its subcellular location is the cytoplasm. The enzyme catalyses (R)-pantoate + beta-alanine + ATP = (R)-pantothenate + AMP + diphosphate + H(+). It functions in the pathway cofactor biosynthesis; (R)-pantothenate biosynthesis; (R)-pantothenate from (R)-pantoate and beta-alanine: step 1/1. Functionally, catalyzes the condensation of pantoate with beta-alanine in an ATP-dependent reaction via a pantoyl-adenylate intermediate. The chain is Pantothenate synthetase from Chromobacterium violaceum (strain ATCC 12472 / DSM 30191 / JCM 1249 / CCUG 213 / NBRC 12614 / NCIMB 9131 / NCTC 9757 / MK).